The sequence spans 450 residues: ATP-dependent protease ATPase subunit HslU (450 aa).

Residues Ile-18 and 60–65 (GVGKTE) contribute to the ATP site. A compositionally biased stretch (polar residues) spans 140–151 (KTSSSGWAQQQE). Residues 140 to 162 (KTSSSGWAQQQEETPENDDQRGT) are disordered. ATP contacts are provided by Asp-263, Glu-328, and Arg-400.

This sequence belongs to the ClpX chaperone family. HslU subfamily. As to quaternary structure, a double ring-shaped homohexamer of HslV is capped on each side by a ring-shaped HslU homohexamer. The assembly of the HslU/HslV complex is dependent on binding of ATP.

Its subcellular location is the cytoplasm. Its function is as follows. ATPase subunit of a proteasome-like degradation complex; this subunit has chaperone activity. The binding of ATP and its subsequent hydrolysis by HslU are essential for unfolding of protein substrates subsequently hydrolyzed by HslV. HslU recognizes the N-terminal part of its protein substrates and unfolds these before they are guided to HslV for hydrolysis. In Idiomarina loihiensis (strain ATCC BAA-735 / DSM 15497 / L2-TR), this protein is ATP-dependent protease ATPase subunit HslU.